The primary structure comprises 165 residues: MWATYVFIAVSLACANGYSSGAPESVCQDMVPKHPVPPQSTPPPYTITTSTKTVKAGTPMEVVITGKKPTDKMRGLLLQAREGTKIVGKFTLAPNDPFAQLLNCGEPGNAITHKKHDEKNDKQTVAFTWTPPKDFVGEIKFRATIALNGAVFWVGVESGPVKVIS.

Residues methionine 1–glycine 17 form the signal peptide. Positions tyrosine 18 to serine 165 constitute a Reelin domain. Cysteine 27 and cysteine 104 are oxidised to a cystine.

The protein belongs to the insect defense protein family.

Its subcellular location is the secreted. Functionally, as this protein is expressed upon bacterial infection, it may have antimicrobial activity. This is Putative defense protein Hdd11 from Hyphantria cunea (Fall webworm moth).